Here is a 480-residue protein sequence, read N- to C-terminus: uncharacterized protein (480 aa).

Positions 131–207 (KKIIKIKNDV…KVVKVRFFIK (77 aa)) constitute a PUA domain.

The protein in the C-terminal section; belongs to the PAPS reductase family.

This is an uncharacterized protein from Methanocaldococcus jannaschii (strain ATCC 43067 / DSM 2661 / JAL-1 / JCM 10045 / NBRC 100440) (Methanococcus jannaschii).